The chain runs to 504 residues: Maturase K (504 aa).

Belongs to the intron maturase 2 family. MatK subfamily.

It localises to the plastid. Its subcellular location is the chloroplast. In terms of biological role, usually encoded in the trnK tRNA gene intron. Probably assists in splicing its own and other chloroplast group II introns. The polypeptide is Maturase K (Actinidia deliciosa (Kiwi)).